The following is a 543-amino-acid chain: CTP synthase (543 aa).

Positions 1-265 (MARYIFITGG…DDEVLAAFGI (265 aa)) are amidoligase domain. A CTP-binding site is contributed by S13. Residue S13 participates in UTP binding. Residue 14 to 19 (SLGKGL) coordinates ATP. L-glutamine is bound at residue Y54. D71 contributes to the ATP binding site. D71 and E139 together coordinate Mg(2+). CTP-binding positions include 146-148 (DIE), 186-191 (KTKPTQ), and K222. Residues 186–191 (KTKPTQ) and K222 contribute to the UTP site. Position 238-240 (238-240 (RDV)) interacts with ATP. The Glutamine amidotransferase type-1 domain maps to 291 to 542 (TIAIVGKYTG…VQAAVVQSRL (252 aa)). G353 is an L-glutamine binding site. The active-site Nucleophile; for glutamine hydrolysis is the C380. L-glutamine contacts are provided by residues 381–384 (FGMQ), E404, and R470. Residues H515 and E517 contribute to the active site.

Belongs to the CTP synthase family. Homotetramer.

It catalyses the reaction UTP + L-glutamine + ATP + H2O = CTP + L-glutamate + ADP + phosphate + 2 H(+). The catalysed reaction is L-glutamine + H2O = L-glutamate + NH4(+). The enzyme catalyses UTP + NH4(+) + ATP = CTP + ADP + phosphate + 2 H(+). Its pathway is pyrimidine metabolism; CTP biosynthesis via de novo pathway; CTP from UDP: step 2/2. With respect to regulation, allosterically activated by GTP, when glutamine is the substrate; GTP has no effect on the reaction when ammonia is the substrate. The allosteric effector GTP functions by stabilizing the protein conformation that binds the tetrahedral intermediate(s) formed during glutamine hydrolysis. Inhibited by the product CTP, via allosteric rather than competitive inhibition. In terms of biological role, catalyzes the ATP-dependent amination of UTP to CTP with either L-glutamine or ammonia as the source of nitrogen. Regulates intracellular CTP levels through interactions with the four ribonucleotide triphosphates. The protein is CTP synthase of Rhodopseudomonas palustris (strain BisB18).